The primary structure comprises 513 residues: MEISWGRALWRNFLGQSPDWYKLALIIFLIVNPLIFLISPFVAGWLLVAEFIFTLAMALKCYPLLPGGLLAIEAVFIGMTSAEHVREEVAANLEVLLLLMFMVAGIYFMKQLLLFIFTRLLLSIRSKMLLSLSFCVAAAFLSAFLDALTVVAVVISVAVGFYGIYHRVASSRTEDTDLQDDSHIDKHYNVVLEQFRGFLRSLMMHAGVGTALGGVMTMVGEPQNLIIAKAAGWHFGDFFLRMSPVTVPVLICGLLTCLLVEKLRWFGYGETLPEKVREVLQQFDDQSRHQRTRQDKIRLIVQAIIGVWLVTALALHLAEVGLIGLSVIILATSLTGVTDEHAIGKAFTESLPFTALLTVFFSVVAVIIDQQLFSPIIQFVLQASEHAQLSLFYIFNGLLSSISDNVFVGTIYINEAKAAMESGAITLKQYELLAVAINTGTNLPSVATPNGQAAFLFLLTSALAPLIRLSYGRMVWMALPYTLVLTLVGLLCVEFTLAPVTEWFMQMGWIATL.

The next 12 helical transmembrane spans lie at 23 to 43 (LALI…PFVA), 52 to 72 (IFTL…LLAI), 97 to 117 (LLLM…LFIF), 120 to 140 (LLLS…AAAF), 144 to 164 (FLDA…FYGI), 202 to 222 (LMMH…VGEP), 238 to 258 (FFLR…LTCL), 303 to 323 (AIIG…VGLI), 348 to 368 (TESL…AVII), 391 to 411 (LFYI…VGTI), 447 to 467 (ATPN…APLI), and 475 to 495 (VWMA…CVEF).

Belongs to the NhaB Na(+)/H(+) (TC 2.A.34) antiporter family.

It is found in the cell inner membrane. The enzyme catalyses 2 Na(+)(in) + 3 H(+)(out) = 2 Na(+)(out) + 3 H(+)(in). In terms of biological role, na(+)/H(+) antiporter that extrudes sodium in exchange for external protons. This chain is Na(+)/H(+) antiporter NhaB, found in Shigella flexneri serotype 5b (strain 8401).